A 139-amino-acid chain; its full sequence is Plastocyanin (139 aa).

Residues 1 to 34 (MKLISASLRRFSLAVLTILLVVSSFAVFTPSASA) form the signal peptide. In terms of domain architecture, Plastocyanin-like spans 35–139 (ETYQVKLGTD…GMVGTITVQG (105 aa)). Positions 73, 123, 126, and 131 each coordinate Cu cation.

Belongs to the plastocyanin family. It depends on Cu(2+) as a cofactor.

It localises to the cellular thylakoid membrane. Participates in electron transfer between P700 and the cytochrome b6-f complex in photosystem I. This Nostoc punctiforme (strain ATCC 29133 / PCC 73102) protein is Plastocyanin.